Consider the following 372-residue polypeptide: Glutamate 5-kinase (372 aa).

Lysine 14 provides a ligand contact to ATP. 3 residues coordinate substrate: serine 54, aspartate 141, and asparagine 153. ATP is bound by residues 173–174 (TD) and 215–221 (TGGMLTK). The region spanning 280 to 358 (AGRLVLDDGA…RDIERLLGYV (79 aa)) is the PUA domain.

The protein belongs to the glutamate 5-kinase family.

The protein localises to the cytoplasm. It catalyses the reaction L-glutamate + ATP = L-glutamyl 5-phosphate + ADP. The protein operates within amino-acid biosynthesis; L-proline biosynthesis; L-glutamate 5-semialdehyde from L-glutamate: step 1/2. Functionally, catalyzes the transfer of a phosphate group to glutamate to form L-glutamate 5-phosphate. The chain is Glutamate 5-kinase from Laribacter hongkongensis (strain HLHK9).